A 366-amino-acid polypeptide reads, in one-letter code: Mitochondrial division protein fszB (366 aa).

GTP-binding positions include 70-74 (GGGGN), 157-159 (GTG), glutamate 190, and aspartate 238.

It belongs to the FtsZ family.

Its subcellular location is the mitochondrion. Probably involved in mitochondrion division process. Binds to and hydrolyzes GTP. This chain is Mitochondrial division protein fszB (fszB), found in Dictyostelium discoideum (Social amoeba).